We begin with the raw amino-acid sequence, 392 residues long: Pannexin-3 (392 aa).

The Cytoplasmic portion of the chain corresponds to 1–39 (MSLAHTAAEYMLSDALLPDRRGPRLKGLRLELPLDRIVK). Residues 40-60 (FVAVGSPLLLMSLAFAQEFSS) traverse the membrane as a helical segment. Topologically, residues 61 to 113 (GSPISCFSPSNFSIRQAAYVDSSCWDSLLHHKQDGPGQDKMKSLWPHKALPYS) are extracellular. Residue asparagine 71 is glycosylated (N-linked (GlcNAc...) asparagine). The chain crosses the membrane as a helical span at residues 114-134 (LLALALLMYLPVLLWQYAAVP). Residues 135 to 215 (ALSSDLLFII…VATYLLRNSL (81 aa)) lie on the Cytoplasmic side of the membrane. The helical transmembrane segment at 216-236 (LLIFTSATYLYLGHFHLDVFF) threads the bilayer. Over 237–267 (QEEFSCSIKTGLLSDETHVPNLITCRLTSLS) the chain is Extracellular. Residues 268–288 (IFQIVSLSSVAIYTILVPVII) form a helical membrane-spanning segment. Residues 289–392 (YNLTRLCRWD…LTNSACDEHP (104 aa)) are Cytoplasmic-facing.

This sequence belongs to the pannexin family. In terms of assembly, homoheptameric.

The protein localises to the cell membrane. It localises to the cell junction. Its subcellular location is the gap junction. It is found in the endoplasmic reticulum membrane. It catalyses the reaction Ca(2+)(in) = Ca(2+)(out). It carries out the reaction ATP(in) = ATP(out). Its function is as follows. Regulator of osteoblast differentiation by functionning as a Ca(2+) channel in the endoplasmic reticulum which regulates calmodulin (CaM) pathways. Allows ATP release into the extracellular space and activation or purinergic receptors. The polypeptide is Pannexin-3 (Homo sapiens (Human)).